The chain runs to 433 residues: C2H2 type master regulator of conidiophore development brlA (433 aa).

2 disordered regions span residues 23–64 (PSEC…SHYH) and 240–265 (KTHT…PVSR). A compositionally biased stretch (low complexity) spans 30-48 (TSSFSPLDSPTPTPTSLYS). Residues 240 to 264 (KTHTPSTPHRSVSMGTPSGSDTPVS) show a composition bias toward polar residues. 2 consecutive C2H2-type zinc fingers follow at residues 321 to 345 (FKCK…MKSH) and 351 to 376 (HVCW…TKTH). The segment at 391-416 (ETSQDFDPDFRGQLTPDGRPIYGSKL) is disordered.

It localises to the nucleus. Functionally, brlA, abaA and wetA are pivotal regulators of conidiophore development and conidium maturation. They act individually and together to regulate their own expression and that of numerous other sporulation-specific genes. Binds promoters of target genes at brlA response elements (BREs) containing the conserved sequence 5'-(C/A)(A/G)AGGG(G/A)-3'. Is not required for penicillin V production. The protein is C2H2 type master regulator of conidiophore development brlA of Penicillium rubens (strain ATCC 28089 / DSM 1075 / NRRL 1951 / Wisconsin 54-1255) (Penicillium chrysogenum).